A 54-amino-acid chain; its full sequence is uncharacterized protein (54 aa).

A disordered region spans residues 1-54; sequence MSKKSTPMTKDAASRIQSSAAKSGGDVSSGSFASRAQSAAAINANNTSNSTGKK. Residues 28–54 show a composition bias toward low complexity; the sequence is SSGSFASRAQSAAAINANNTSNSTGKK.

This is an uncharacterized protein from Dictyostelium discoideum (Social amoeba).